The following is a 312-amino-acid chain: Malate dehydrogenase (312 aa).

Residues 7 to 13 and Asp-34 each bind NAD(+); that span reads GAAGGIG. Arg-81 and Arg-87 together coordinate substrate. NAD(+) contacts are provided by residues Asn-94 and 117 to 119; that span reads ITN. Substrate contacts are provided by Asn-119 and Arg-153. Catalysis depends on His-177, which acts as the Proton acceptor. Residue Met-227 coordinates NAD(+).

It belongs to the LDH/MDH superfamily. MDH type 1 family. Homodimer.

The enzyme catalyses (S)-malate + NAD(+) = oxaloacetate + NADH + H(+). Its function is as follows. Catalyzes the reversible oxidation of malate to oxaloacetate. The polypeptide is Malate dehydrogenase (Pectobacterium carotovorum subsp. carotovorum (strain PC1)).